Consider the following 236-residue polypeptide: Probable pseudouridine-5'-phosphatase YKL033W-A (236 aa).

This sequence belongs to the HAD-like hydrolase superfamily.

The catalysed reaction is XMP + H2O = xanthosine + phosphate. It carries out the reaction psi-UMP + H2O = pseudouridine + phosphate. Nucleotidase with XMP as the best in vitro substrate. Low catalytic efficiencies of YKL033W-A observed with XMP and other substrates suggest that these could be secondary activities for this protein, and its primary substrate is not yet identified. May possess pseudouridine 5'-phosphatase activity and together with dTTP/UTP pyrophosphatase YOR111W might constitute a pathway for the detoxification of pseudouridine 5'-triphosphate (Psi-UTP) and -monophosphate (Psi-UMP). This Saccharomyces cerevisiae (strain ATCC 204508 / S288c) (Baker's yeast) protein is Probable pseudouridine-5'-phosphatase YKL033W-A.